The primary structure comprises 184 residues: Photosystem I assembly protein Ycf4 (184 aa).

2 helical membrane passes run 22–42 (FCWA…GTSS) and 57–77 (IIFF…LFIS).

This sequence belongs to the Ycf4 family.

Its subcellular location is the plastid. It is found in the chloroplast thylakoid membrane. Functionally, seems to be required for the assembly of the photosystem I complex. In Lepidium virginicum (Virginia pepperweed), this protein is Photosystem I assembly protein Ycf4.